Reading from the N-terminus, the 244-residue chain is rRNA adenine N-6-methyltransferase (244 aa).

Positions 11, 13, 38, 59, 84, and 101 each coordinate S-adenosyl-L-methionine.

Belongs to the class I-like SAM-binding methyltransferase superfamily. rRNA adenine N(6)-methyltransferase family.

The catalysed reaction is adenosine(2085) in 23S rRNA + 2 S-adenosyl-L-methionine = N(6)-dimethyladenosine(2085) in 23S rRNA + 2 S-adenosyl-L-homocysteine + 2 H(+). Functionally, this protein produces a dimethylation of the adenine residue at position 2085 in 23S rRNA, resulting in reduced affinity between ribosomes and macrolide-lincosamide-streptogramin B antibiotics. The sequence is that of rRNA adenine N-6-methyltransferase (ermM) from Staphylococcus epidermidis.